We begin with the raw amino-acid sequence, 398 residues long: Phosphoglycerate kinase (398 aa).

Substrate-binding positions include 23 to 25 (DFN), Arg-38, 61 to 64 (HMGK), Arg-122, and Arg-155. Residues Lys-206, Gly-297, Glu-328, and 354 to 357 (GGDS) each bind ATP.

Belongs to the phosphoglycerate kinase family. Monomer.

The protein localises to the cytoplasm. The catalysed reaction is (2R)-3-phosphoglycerate + ATP = (2R)-3-phospho-glyceroyl phosphate + ADP. It functions in the pathway carbohydrate degradation; glycolysis; pyruvate from D-glyceraldehyde 3-phosphate: step 2/5. In Clostridium botulinum (strain 657 / Type Ba4), this protein is Phosphoglycerate kinase.